Reading from the N-terminus, the 442-residue chain is MIPPTSAQVTAEQNVLQTFFSHLGNFSYDKAKDHVEKEKEGNKSAGASWSLMLAALAHLAAAQKAYHSMSFLGQKQGGQLFFSRKDSIRTNYTSLYNELKKVVTTGRNAVGGTAPHLEELLSHLSEQLCYFVQAHMEIADFYEKMYTLSSQKFINAEELVKILEAILKKYSSRFHHPTLSPLESGFQLEVDVLAHLLKAQFLIYEWKFLPALVNLHNAHTKLQTWGQIFEKQKETKKHLFGGQSQKVAQPPHLFLWLMKFKNLLLAKFSFYFHEALSRQTSEMKTLTAKTNPDYFGKISSFIRKYDAVNVSLIYDTRGSENFQGHGYHHPDSYREAPKGMDQYPAVVSLPNDRPIMHWPNVIMIMTDKSADLNTLEKVVHFYDDKVQSTYFLTRPEPNFTIVVIFESKKSERDSHFTSFLNELSQSLKGSRAFASLKPGSKV.

It belongs to the KICS2 family. In terms of assembly, may be part of the KICSTOR complex.

The protein localises to the lysosome membrane. Its function is as follows. As part of the KICSTOR complex may function in the amino acid-sensing branch of the TORC1 signaling pathway. The protein is KICSTOR subunit 2 (kics2) of Xenopus laevis (African clawed frog).